Here is a 427-residue protein sequence, read N- to C-terminus: MTAIVDIIGREILDSRGNPTVEVDVVLEDGSVGRAAVPSGASTGAHEAVELRDGDKSRYLGKGVLKAVEAVNGELFDALGGMDAEAQVQIDQTMIELDGTPNKSRLGANAILGVSLAVAKAAASSYDLPLYRYVGGTSARTLPVPMMNIINGGAHADNPIDFQEFMIMPAGAASFSEALRCGSEIFHTLKGELKKAGHNTNVGDEGGFAPNLPSADAALDFVVSAIGKAGYKAGEDVMIALDPASTEFFKNGKYVYEAEGRSLGPQEQAKYLADLVARYPIVSIEDGMAEDDIEGWKAITGLIGDKCQLVGDDLFVTNVTRLYDGIKNGYANSILIKVNQIGTLTETLAAVEMAHKAGYTAVMSHRSGETEDSTIADLAVATNCGQIKTGSLARADRTSKYNQLLRIEQELGTQAHFAGKAALKAFR.

(2R)-2-phosphoglycerate is bound at residue Gln163. The active-site Proton donor is the Glu205. Residues Asp242, Glu285, and Asp312 each coordinate Mg(2+). Lys337, Arg366, Ser367, and Lys388 together coordinate (2R)-2-phosphoglycerate. The active-site Proton acceptor is Lys337.

Belongs to the enolase family. Mg(2+) serves as cofactor.

It localises to the cytoplasm. The protein resides in the secreted. The protein localises to the cell surface. It carries out the reaction (2R)-2-phosphoglycerate = phosphoenolpyruvate + H2O. It participates in carbohydrate degradation; glycolysis; pyruvate from D-glyceraldehyde 3-phosphate: step 4/5. Its function is as follows. Catalyzes the reversible conversion of 2-phosphoglycerate (2-PG) into phosphoenolpyruvate (PEP). It is essential for the degradation of carbohydrates via glycolysis. The protein is Enolase of Rhodopseudomonas palustris (strain HaA2).